The chain runs to 122 residues: Large ribosomal subunit protein uL14 (122 aa).

This sequence belongs to the universal ribosomal protein uL14 family. As to quaternary structure, part of the 50S ribosomal subunit. Forms a cluster with proteins L3 and L19. In the 70S ribosome, L14 and L19 interact and together make contacts with the 16S rRNA in bridges B5 and B8.

Binds to 23S rRNA. Forms part of two intersubunit bridges in the 70S ribosome. This chain is Large ribosomal subunit protein uL14, found in Azorhizobium caulinodans (strain ATCC 43989 / DSM 5975 / JCM 20966 / LMG 6465 / NBRC 14845 / NCIMB 13405 / ORS 571).